Here is a 185-residue protein sequence, read N- to C-terminus: Elongation factor P (185 aa).

It belongs to the elongation factor P family.

The protein localises to the cytoplasm. It participates in protein biosynthesis; polypeptide chain elongation. In terms of biological role, involved in peptide bond synthesis. Stimulates efficient translation and peptide-bond synthesis on native or reconstituted 70S ribosomes in vitro. Probably functions indirectly by altering the affinity of the ribosome for aminoacyl-tRNA, thus increasing their reactivity as acceptors for peptidyl transferase. This chain is Elongation factor P, found in Moorella thermoacetica (strain ATCC 39073 / JCM 9320).